Here is a 1361-residue protein sequence, read N- to C-terminus: DNA-directed RNA polymerase subunit beta (1361 aa).

The protein belongs to the RNA polymerase beta chain family. The RNAP catalytic core consists of 2 alpha, 1 beta, 1 beta' and 1 omega subunit. When a sigma factor is associated with the core the holoenzyme is formed, which can initiate transcription.

It catalyses the reaction RNA(n) + a ribonucleoside 5'-triphosphate = RNA(n+1) + diphosphate. Its function is as follows. DNA-dependent RNA polymerase catalyzes the transcription of DNA into RNA using the four ribonucleoside triphosphates as substrates. In Saccharophagus degradans (strain 2-40 / ATCC 43961 / DSM 17024), this protein is DNA-directed RNA polymerase subunit beta.